Reading from the N-terminus, the 938-residue chain is Isoleucine--tRNA ligase (938 aa).

Positions 58 to 68 (PYANGNIHIGH) match the 'HIGH' region motif. Residue Glu-561 coordinates L-isoleucyl-5'-AMP. Residues 602–606 (KMSKS) carry the 'KMSKS' region motif. Lys-605 is an ATP binding site. Residues Cys-901, Cys-904, Cys-921, and Cys-924 each contribute to the Zn(2+) site.

The protein belongs to the class-I aminoacyl-tRNA synthetase family. IleS type 1 subfamily. In terms of assembly, monomer. The cofactor is Zn(2+).

The protein localises to the cytoplasm. The catalysed reaction is tRNA(Ile) + L-isoleucine + ATP = L-isoleucyl-tRNA(Ile) + AMP + diphosphate. Its function is as follows. Catalyzes the attachment of isoleucine to tRNA(Ile). As IleRS can inadvertently accommodate and process structurally similar amino acids such as valine, to avoid such errors it has two additional distinct tRNA(Ile)-dependent editing activities. One activity is designated as 'pretransfer' editing and involves the hydrolysis of activated Val-AMP. The other activity is designated 'posttransfer' editing and involves deacylation of mischarged Val-tRNA(Ile). The polypeptide is Isoleucine--tRNA ligase (Yersinia pseudotuberculosis serotype O:1b (strain IP 31758)).